The following is a 62-amino-acid chain: Small ribosomal subunit protein bS21 (62 aa).

The interval 38–62 (YEKPSERRKRKMNAAVRKNRRTRHG) is disordered.

Belongs to the bacterial ribosomal protein bS21 family.

This is Small ribosomal subunit protein bS21 from Gemmatimonas aurantiaca (strain DSM 14586 / JCM 11422 / NBRC 100505 / T-27).